We begin with the raw amino-acid sequence, 369 residues long: tRNA-specific 2-thiouridylase MnmA (369 aa).

Residues 10-17 (GLSGGVDS) and L36 each bind ATP. The Nucleophile role is filled by C97. C97 and C196 form a disulfide bridge. Residue G122 coordinates ATP. The interval 146–148 (KDQ) is interaction with tRNA. The active-site Cysteine persulfide intermediate is the C196. Residues 301–302 (RY) form an interaction with tRNA region.

The protein belongs to the MnmA/TRMU family.

It is found in the cytoplasm. It carries out the reaction S-sulfanyl-L-cysteinyl-[protein] + uridine(34) in tRNA + AH2 + ATP = 2-thiouridine(34) in tRNA + L-cysteinyl-[protein] + A + AMP + diphosphate + H(+). In terms of biological role, catalyzes the 2-thiolation of uridine at the wobble position (U34) of tRNA, leading to the formation of s(2)U34. The chain is tRNA-specific 2-thiouridylase MnmA from Thermosynechococcus vestitus (strain NIES-2133 / IAM M-273 / BP-1).